Here is a 319-residue protein sequence, read N- to C-terminus: Polyprenal reductase (319 aa).

The Cytoplasmic segment spans residues 1 to 12; that stretch reads MQLVQLLPPGVS. A helical transmembrane segment spans residues 13 to 33; it reads LLALVWLAVDAAFLTALLLYL. Residues 34–79 lie on the Lumenal side of the membrane; that stretch reads QRGCDSGRSLLCSVFQDLIRYGKTKSGLRRPSWLQWFDIPKRCFWH. The helical transmembrane segment at 80-100 threads the bilayer; the sequence is FYFVSLVWNGFLLWILLHLLL. Residues 101–122 lie on the Cytoplasmic side of the membrane; the sequence is QSVPVPEWLQAVLQFLCAGSEP. A helical membrane pass occupies residues 123–143; that stretch reads QVLGGELSVVLAFSLLWLHSL. The Lumenal segment spans residues 144–158; that stretch reads RRLLECLFVSIFSNG. Residues 159–179 traverse the membrane as a helical segment; sequence VIHFVQYCFGLGYYILIGFTI. The Cytoplasmic segment spans residues 180–195; it reads LGYCPLDRRTAVSLDD. A helical membrane pass occupies residues 196 to 216; the sequence is LLMQGNWYHILGLTLYVWASL. The Lumenal portion of the chain corresponds to 217–266; sequence HQYTCHCILADLRKSASGAIINLKHAVPTGDWFEKVSCPHYFAELLIYLS. Residues 267 to 287 traverse the membrane as a helical segment; sequence IAVVFGLLNTIWWLVVLYVLL. Over 288-319 the chain is Cytoplasmic; it reads SQALAAVLCHEFYHEKFDSYPIHRKAFIPLIF.

This sequence belongs to the steroid 5-alpha reductase family. Polyprenal reductase subfamily.

The protein resides in the endoplasmic reticulum membrane. It catalyses the reaction a di-trans,poly-cis-dolichal + NADP(+) = a di-trans,poly-cis-polyprenal + NADPH + H(+). The catalysed reaction is a 3-oxo-5alpha-steroid + NADP(+) = a 3-oxo-Delta(4)-steroid + NADPH + H(+). The enzyme catalyses androst-4-ene-3,17-dione + NADPH + H(+) = 5alpha-androstan-3,17-dione + NADP(+). It carries out the reaction 17beta-hydroxy-5alpha-androstan-3-one + NADP(+) = testosterone + NADPH + H(+). Its pathway is protein modification; protein glycosylation. Plays a key role in early steps of protein N-linked glycosylation by being involved in the conversion of polyprenol into dolichol. Acts as a polyprenal reductase that mediates the reduction of polyprenal into dolichal in a NADP-dependent mechanism. Dolichols are required for the synthesis of dolichol-linked monosaccharides and the oligosaccharide precursor used for N-glycosylation. Also able to convert testosterone (T) into 5-alpha-dihydrotestosterone (DHT). In Xenopus laevis (African clawed frog), this protein is Polyprenal reductase (srd5a3).